The primary structure comprises 158 residues: Phosphopantetheine adenylyltransferase (158 aa).

Threonine 10 is a substrate binding site. ATP contacts are provided by residues 10-11 (TF) and histidine 18. Substrate contacts are provided by lysine 42, leucine 74, and arginine 88. Residues 89 to 91 (GLR), glutamate 99, and 124 to 130 (NSFISST) each bind ATP.

It belongs to the bacterial CoaD family. In terms of assembly, homohexamer. Requires Mg(2+) as cofactor.

It is found in the cytoplasm. The catalysed reaction is (R)-4'-phosphopantetheine + ATP + H(+) = 3'-dephospho-CoA + diphosphate. It functions in the pathway cofactor biosynthesis; coenzyme A biosynthesis; CoA from (R)-pantothenate: step 4/5. Reversibly transfers an adenylyl group from ATP to 4'-phosphopantetheine, yielding dephospho-CoA (dPCoA) and pyrophosphate. This chain is Phosphopantetheine adenylyltransferase, found in Shewanella woodyi (strain ATCC 51908 / MS32).